Here is a 149-residue protein sequence, read N- to C-terminus: Large ribosomal subunit protein eL19 (149 aa).

The tract at residues 67–90 is disordered; that stretch reads KRKLQKRKGRRRGHGSRKGAKGAR.

The protein belongs to the eukaryotic ribosomal protein eL19 family. In terms of assembly, part of the 50S ribosomal subunit.

Binds to the 23S rRNA. The polypeptide is Large ribosomal subunit protein eL19 (Archaeoglobus fulgidus (strain ATCC 49558 / DSM 4304 / JCM 9628 / NBRC 100126 / VC-16)).